Consider the following 227-residue polypeptide: Phosphoribosylformylglycinamidine synthase subunit PurQ (227 aa).

The 225-residue stretch at 3–227 folds into the Glutamine amidotransferase type-1 domain; the sequence is FAVIVFPGSN…NWRESHVTAS (225 aa). Cys86 serves as the catalytic Nucleophile. Residues His194 and Glu196 contribute to the active site.

Part of the FGAM synthase complex composed of 1 PurL, 1 PurQ and 2 PurS subunits.

It localises to the cytoplasm. The catalysed reaction is N(2)-formyl-N(1)-(5-phospho-beta-D-ribosyl)glycinamide + L-glutamine + ATP + H2O = 2-formamido-N(1)-(5-O-phospho-beta-D-ribosyl)acetamidine + L-glutamate + ADP + phosphate + H(+). It catalyses the reaction L-glutamine + H2O = L-glutamate + NH4(+). It participates in purine metabolism; IMP biosynthesis via de novo pathway; 5-amino-1-(5-phospho-D-ribosyl)imidazole from N(2)-formyl-N(1)-(5-phospho-D-ribosyl)glycinamide: step 1/2. Part of the phosphoribosylformylglycinamidine synthase complex involved in the purines biosynthetic pathway. Catalyzes the ATP-dependent conversion of formylglycinamide ribonucleotide (FGAR) and glutamine to yield formylglycinamidine ribonucleotide (FGAM) and glutamate. The FGAM synthase complex is composed of three subunits. PurQ produces an ammonia molecule by converting glutamine to glutamate. PurL transfers the ammonia molecule to FGAR to form FGAM in an ATP-dependent manner. PurS interacts with PurQ and PurL and is thought to assist in the transfer of the ammonia molecule from PurQ to PurL. This Shouchella clausii (strain KSM-K16) (Alkalihalobacillus clausii) protein is Phosphoribosylformylglycinamidine synthase subunit PurQ.